The following is a 132-amino-acid chain: Protein LEKR1 (132 aa).

The stretch at 37 to 116 forms a coiled coil; the sequence is FKAMEEKVKA…KKQLSHLQDE (80 aa).

The polypeptide is Protein LEKR1 (LEKR1) (Homo sapiens (Human)).